The sequence spans 102 residues: Small ribosomal subunit protein uS10 (102 aa).

Belongs to the universal ribosomal protein uS10 family. Part of the 30S ribosomal subunit.

Its function is as follows. Involved in the binding of tRNA to the ribosomes. This chain is Small ribosomal subunit protein uS10, found in Arthrobacter sp. (strain FB24).